The primary structure comprises 278 residues: S-formylglutathione hydrolase YeiG (278 aa).

Active-site charge relay system residues include Ser145, Asp223, and His256.

Belongs to the esterase D family.

The catalysed reaction is S-formylglutathione + H2O = formate + glutathione + H(+). Its function is as follows. Serine hydrolase involved in the detoxification of formaldehyde. Hydrolyzes S-formylglutathione to glutathione and formate. The polypeptide is S-formylglutathione hydrolase YeiG (yeiG) (Shigella flexneri serotype 5b (strain 8401)).